A 1695-amino-acid chain; its full sequence is Protein TOPAZ1 (1695 aa).

3 disordered regions span residues Met1–Gln128, Met441–Arg474, and Ala725–Thr753. Positions Arg43–Met52 are enriched in basic residues. Basic and acidic residues-rich tracts occupy residues Gly59 to Ser68, Ser92 to Thr113, and Asn459 to Arg474. Over residues Ser735–Thr753 the composition is skewed to polar residues.

It is found in the cytoplasm. Its subcellular location is the cytosol. Functionally, important for normal spermatogenesis and male fertility. Specifically required for progression to the post-meiotic stages of spermatocyte development. Seems to be necessary for normal expression levels of a number of testis-expressed gene transcripts, although its role in this process is unclear. This Callithrix jacchus (White-tufted-ear marmoset) protein is Protein TOPAZ1 (TOPAZ1).